Reading from the N-terminus, the 370-residue chain is Small ribosomal subunit biogenesis GTPase RsgA (370 aa).

In terms of domain architecture, CP-type G spans Q97–P255. GTP contacts are provided by residues N146–D149 and G197–S205. Zn(2+)-binding residues include C280, C285, H287, and C293. Residues T328–E370 form a disordered region.

Belongs to the TRAFAC class YlqF/YawG GTPase family. RsgA subfamily. In terms of assembly, monomer. Associates with 30S ribosomal subunit, binds 16S rRNA. The cofactor is Zn(2+).

The protein localises to the cytoplasm. One of several proteins that assist in the late maturation steps of the functional core of the 30S ribosomal subunit. Helps release RbfA from mature subunits. May play a role in the assembly of ribosomal proteins into the subunit. Circularly permuted GTPase that catalyzes slow GTP hydrolysis, GTPase activity is stimulated by the 30S ribosomal subunit. The sequence is that of Small ribosomal subunit biogenesis GTPase RsgA from Trichormus variabilis (strain ATCC 29413 / PCC 7937) (Anabaena variabilis).